The following is a 72-amino-acid chain: NAD(P)H-quinone oxidoreductase subunit O (72 aa).

It belongs to the complex I NdhO subunit family. As to quaternary structure, NDH-1 can be composed of about 15 different subunits; different subcomplexes with different compositions have been identified which probably have different functions.

The protein resides in the cellular thylakoid membrane. It carries out the reaction a plastoquinone + NADH + (n+1) H(+)(in) = a plastoquinol + NAD(+) + n H(+)(out). It catalyses the reaction a plastoquinone + NADPH + (n+1) H(+)(in) = a plastoquinol + NADP(+) + n H(+)(out). Functionally, NDH-1 shuttles electrons from an unknown electron donor, via FMN and iron-sulfur (Fe-S) centers, to quinones in the respiratory and/or the photosynthetic chain. The immediate electron acceptor for the enzyme in this species is believed to be plastoquinone. Couples the redox reaction to proton translocation, and thus conserves the redox energy in a proton gradient. Cyanobacterial NDH-1 also plays a role in inorganic carbon-concentration. This Synechococcus elongatus (strain ATCC 33912 / PCC 7942 / FACHB-805) (Anacystis nidulans R2) protein is NAD(P)H-quinone oxidoreductase subunit O.